The primary structure comprises 434 residues: Eukaryotic peptide chain release factor subunit 1-2 (434 aa).

Residue Ala2 is modified to N-acetylalanine.

It belongs to the eukaryotic release factor 1 family. As to quaternary structure, heterodimer of two subunits, one of which binds GTP.

It localises to the cytoplasm. Functionally, directs the termination of nascent peptide synthesis (translation) in response to the termination codons UAA, UAG and UGA. Modulates plant growth and development. The polypeptide is Eukaryotic peptide chain release factor subunit 1-2 (Arabidopsis thaliana (Mouse-ear cress)).